Consider the following 740-residue polypeptide: Eukaryotic translation initiation factor 3 subunit B (740 aa).

Over residues 1 to 10 the composition is skewed to polar residues; that stretch reads MAPSFDTLTE. Residues 1-22 are disordered; sequence MAPSFDTLTEQDLHEEEEEEID. Residues 13–22 show a composition bias toward acidic residues; sequence LHEEEEEEID. The RRM domain occupies 40-126; that stretch reads TFVVIDGLPV…HTLAVNKLMD (87 aa). WD repeat units follow at residues 193 to 230, 232 to 289, 302 to 343, 513 to 556, and 571 to 609; these read AHWT…KQKQ, PHPF…RSFV, EPKK…LLGK, IEKK…EKPE, and VEHY…HTFA. Positions 695-721 are disordered; the sequence is DAYGVPEDVDSSKQAKDAPAVSEDQGE.

It belongs to the eIF-3 subunit B family. Component of the eukaryotic translation initiation factor 3 (eIF-3) complex.

It localises to the cytoplasm. Functionally, RNA-binding component of the eukaryotic translation initiation factor 3 (eIF-3) complex, which is involved in protein synthesis of a specialized repertoire of mRNAs and, together with other initiation factors, stimulates binding of mRNA and methionyl-tRNAi to the 40S ribosome. The eIF-3 complex specifically targets and initiates translation of a subset of mRNAs involved in cell proliferation. This is Eukaryotic translation initiation factor 3 subunit B (prt1) from Aspergillus niger (strain ATCC MYA-4892 / CBS 513.88 / FGSC A1513).